The following is a 9518-amino-acid chain: Nonribosomal peptide synthetase ungA' (9518 aa).

The tract at residues 214–611 (ERARETPNAP…ARKDDQVKVR (398 aa)) is adenylation 1. Residues 738 to 814 (APRTEMEWRL…DLAEVARLEQ (77 aa)) form the Carrier 1 domain. Position 775 is an O-(pantetheine 4'-phosphoryl)serine (Ser-775). The interval 853-1250 (DLLPCSPLQE…EEVLRQISRE (398 aa)) is condensation 1. The tract at residues 1292–1695 (QRVQEQPDRP…GRKDTQVKIR (404 aa)) is adenylation 2. In terms of domain architecture, Carrier 2 spans 1822–1898 (LPQTELERRL…RLAHCSQTEQ (77 aa)). Ser-1859 is modified (O-(pantetheine 4'-phosphoryl)serine). The interval 1911 to 2336 (TFALSPIQQL…QRSLEVVAKE (426 aa)) is epimerization 1. The tract at residues 2376-2803 (EDIYPCSPVQ…DNLQIASSQD (428 aa)) is condensation 2. The tract at residues 2829-3224 (RIQQQPEAPA…NRKDNQVKIR (396 aa)) is adenylation 3. The Carrier 3 domain maps to 3352 to 3428 (APATASEQRL…DMAQTLKVES (77 aa)). Ser-3389 carries the post-translational modification O-(pantetheine 4'-phosphoryl)serine. The segment at 3465 to 3869 (EDVLPCTPLQ…QVCKEASQYL (405 aa)) is condensation 3. The adenylation 4 stretch occupies residues 3906–4307 (QQAHQRPNAS…GRRDAQVKIR (402 aa)). The 77-residue stretch at 4436-4512 (TPTTITECRI…RLAACTTPVD (77 aa)) folds into the Carrier 4 domain. Ser-4473 carries the post-translational modification O-(pantetheine 4'-phosphoryl)serine. The tract at residues 4527–4954 (ALSPIQQLFV…EDAAQELPSL (428 aa)) is epimerization 2. The interval 4990 to 5411 (VEDIYPCSPI…ANLISKEDLR (422 aa)) is condensation 4. An adenylation 5 region spans residues 5433–5829 (SEQAQNQPDA…GRKDGQVKIR (397 aa)). Positions 5957–6033 (VASSPVELAL…QLAKNSGLQA (77 aa)) constitute a Carrier 5 domain. The residue at position 5994 (Ser-5994) is an O-(pantetheine 4'-phosphoryl)serine. The tract at residues 6050–6470 (ELSPIQRMFF…CEHSLVMAAH (421 aa)) is epimerization 3. A condensation 5 region spans residues 6512-6856 (VEDIYPCTPI…TGISVQNNAS (345 aa)). Positions 6947-7338 (LRPNSSAIHA…GRKDSQVKVR (392 aa)) are adenylation 6. The Carrier 6 domain maps to 7464–7540 (LPRTEVEMQL…GLAPSAASQA (77 aa)). Position 7501 is an O-(pantetheine 4'-phosphoryl)serine (Ser-7501). An epimerization 4 region spans residues 7555–7978 (ELSPIQQMFI…LQTAARELPH (424 aa)). Residues 8016–8444 (VEDIYPLTPI…QVDLAGRHDQ (429 aa)) form a condensation 6 region. The interval 8468 to 8867 (MQCQQRPDAT…SRKDAQVKIR (400 aa)) is adenylation 7. One can recognise a Carrier 7 domain in the interval 8995–9071 (PLTTEMEWRL…DMAHYLREGQ (77 aa)). The residue at position 9032 (Ser-9032) is an O-(pantetheine 4'-phosphoryl)serine. The segment at 9111 to 9454 (DVYPTTELQD…DNLEHDAGTS (344 aa)) is condensation 7.

This sequence belongs to the NRP synthetase family.

It participates in secondary metabolite biosynthesis. Nonribosomal peptide synthetase; part of the gene cluster that mediates the biosynthesis of the unguisins, gamma-aminobutyric acid (GABA)-containing fungal cyclic heptapeptides with the amino acid sequence cyclo-(D-Ala1-D-Val2-L-Leu3-beta-MePhe4-D-Ala5-D-Trp6-GABA7) for unguisin H and cyclo-(D-Ala1-D-Ala2-L-Leu3-beta-MePhe4-D-Ala5-D-Trp6-GABA7) for unguisin I. UngA' is the main enzyme within the cluster which condenses the 7 residues using its respective 7 modules. The terminal condensation domain (Ct) is involved in cyclization with D-alanine and thereby releasing of unguisins H and I. The alanine racemase ungC' provides D-alanine, which is then accepted by the first adenylation domain of ungA', whereas the methyltransferase ungE' provides the (2R,3R)-beta-methylphenylalanine residue incorporated by the module 4. Finally, the hydrolase ungD' catalyzes the hydrolysis between the D-tryptophan and GABA residues of unguisins H and I to produce the corresponding linear peptides. This Aspergillus campestris (strain IBT 28561) protein is Nonribosomal peptide synthetase ungA'.